We begin with the raw amino-acid sequence, 162 residues long: Ribonuclease (162 aa).

Residues 1–29 (MKKISSVFTMFALIAAILFSGFIPQQAYA) form the signal peptide. Positions 30–53 (ETPLTQTATNETATIQLTSDVHTL) are excised as a propeptide. Residue Glu125 is the Proton acceptor of the active site. The active-site Proton donor is the His154.

It belongs to the ribonuclease N1/T1 family.

It localises to the secreted. In terms of biological role, this is a purine-specific ribonuclease. The chain is Ribonuclease from Bacillus intermedius.